An 838-amino-acid polypeptide reads, in one-letter code: Glutenin, high molecular weight subunit PW212 (838 aa).

The first 21 residues, 1 to 21 (MAKRLVLFVAVVVALVALTVA), serve as a signal peptide directing secretion. The disordered stretch occupies residues 122-794 (SYYPGQASPQ…GQQSGQGQQG (673 aa)). Residues 125 to 136 (PGQASPQRPGQG) are compositionally biased toward low complexity. A compositionally biased stretch (gly residues) spans 137 to 149 (QQPGQGQQSGQGQ). 12 stretches are compositionally biased toward low complexity: residues 150–172 (QGYYPTSPQQPGQWQQPEQGQPG), 179–208 (QQPGQLQQPAQGQQPGQGQQGRQPGQGQPG), 215–245 (QLQPGQLQQPAQGQQGQQPGQGQQGQQPGQG), 268–308 (QGQQ…GQSG), 315–356 (QQPG…PGQG), 364–416 (PGYY…PGQG), 445–473 (SPQQSGQGQQPGQLQQSAQGQKGQQPGQG), 481–532 (QGQQ…YPTS), 549–643 (QQPG…QGQP), 654–677 (GQGQQPGQWQQPGQWQQPGQGQPG), 699–719 (QQPGQGQQPGQWQQSGQGQHG), and 729–773 (GQGQ…GQQG).

This sequence belongs to the gliadin/glutenin family. In terms of assembly, disulfide-bridge linked aggregates.

Its function is as follows. Glutenins are high-molecular weight seed storage proteins of wheat endosperm. Thought to be responsible for the visco-elastic property of wheat dough. This chain is Glutenin, high molecular weight subunit PW212, found in Triticum aestivum (Wheat).